The chain runs to 80 residues: Cytochrome c oxidase subunit 7A1, mitochondrial (80 aa).

The N-terminal 21 residues, 1-21, are a transit peptide targeting the mitochondrion; sequence MRALRVSQALVRSFSSSTRSH. The Mitochondrial matrix portion of the chain corresponds to 22-46; that stretch reads LENRVAEKQKLFQADNDLPVHLKGG. A helical membrane pass occupies residues 47 to 75; that stretch reads GMDNVLYRLTMTLTLGGTAYCLYCLGWAS. At 76 to 80 the chain is on the mitochondrial intermembrane side; sequence FPHKK.

Belongs to the cytochrome c oxidase VIIa family. In terms of assembly, component of the complex IV (CIV, cytochrome c oxidase), a multisubunit enzyme composed of 14 subunits. The complex is composed of a catalytic core of 3 subunits MT-CO1, MT-CO2 and MT-CO3, encoded in the mitochondrial DNA, and 11 supernumerary subunits COX4I, COX5A, COX5B, COX6A, COX6B, COX6C, COX7A, COX7B, COX7C, COX8 and NDUFA4, which are encoded in the nuclear genome. The complex exists as a monomer or a dimer and forms supercomplexes (SCs) in the inner mitochondrial membrane with NADH-ubiquinone oxidoreductase (complex I, CI) and ubiquinol-cytochrome c oxidoreductase (cytochrome b-c1 complex, complex III, CIII), resulting in different assemblies (supercomplex SCI(1)III(2)IV(1) and megacomplex MCI(2)III(2)IV(2)).

It localises to the mitochondrion inner membrane. The protein operates within energy metabolism; oxidative phosphorylation. In terms of biological role, component of the mitochondrial respiratory complex IV (CIV, also named cytochrome c oxidase complex), the last enzyme in the mitochondrial electron transport chain which drives oxidative phosphorylation. The CIV complex is the component of the respiratory chain that catalyzes the reduction of oxygen to water. Acts as an assembly factor that specifically drives the homodimerization of CIV complexes, mediating the formation of mitochondrial respiratory supercomplexes (respirasomes) containing two CIV: supercomplxes with two molecules of CIV show improved activity. Despite being highly expressed in brown adipose tissue, not required for thermogenesis. The chain is Cytochrome c oxidase subunit 7A1, mitochondrial from Mus musculus (Mouse).